The following is a 466-amino-acid chain: MFKLTPREIVEELDKYIIGQQEAKKAVAIALRNRYRRKLLPDELREEIYPKNIIMIGSTGVGKTEIARRLARLVKAPFIKVEASKFTEVGYVGRDVDSMVRDLVETSIRLVKQEKMAAVEQKGRQMAEERIVDILLPFDGRKSKSPKNPFEFLLGSIQERDDVDDESERRRREIGQRREILRQKINRLELEDETIEIEVEEKNPSFMEIFSGSGVEEMGINLQDMLGNLMPRNKKKRKVSIAEARRILTYEESQRLLDMDEIHREGIKRAEEDGIIFLDEIDKIASKESNYGPDVSRGGVQRDILPIVEGSTVITKYGPARTDHVLFIAAGAFHVSKPSDLIPELQGRFPIRVELESLKKEDLKRILTEPNNSLIKQYIALLSTEKLTMDFTPEAIDYIAERAYEVNSRTEDIGARRLHTVMEKLLEDLLFNSPDMAGEKLVIDIDYVAERLDRIVEDEDLSRYIL.

ATP-binding positions include I18, 60–65 (GVGKTE), D279, E344, and R416.

Belongs to the ClpX chaperone family. HslU subfamily. As to quaternary structure, a double ring-shaped homohexamer of HslV is capped on each side by a ring-shaped HslU homohexamer. The assembly of the HslU/HslV complex is dependent on binding of ATP.

It localises to the cytoplasm. In terms of biological role, ATPase subunit of a proteasome-like degradation complex; this subunit has chaperone activity. The binding of ATP and its subsequent hydrolysis by HslU are essential for unfolding of protein substrates subsequently hydrolyzed by HslV. HslU recognizes the N-terminal part of its protein substrates and unfolds these before they are guided to HslV for hydrolysis. This is ATP-dependent protease ATPase subunit HslU from Syntrophomonas wolfei subsp. wolfei (strain DSM 2245B / Goettingen).